The sequence spans 680 residues: Probable oxidoreductase YoaE (680 aa).

The 4Fe-4S Mo/W bis-MGD-type domain maps to 9-66 (NGIFKSVCSLDCPDQCGLLIHKKDGKIVKVQGDPDHPVTAGNICNKVRNMTERIYDEK). Residues cysteine 16, cysteine 20, cysteine 24, and cysteine 52 each coordinate [4Fe-4S] cluster.

It belongs to the prokaryotic molybdopterin-containing oxidoreductase family. The cofactor is Mo-bis(molybdopterin guanine dinucleotide).

The sequence is that of Probable oxidoreductase YoaE (yoaE) from Bacillus subtilis (strain 168).